A 511-amino-acid chain; its full sequence is MEEFKGYLEKSRSKQQHFLYPFLFQEYIYALAHDHGLNVNGSIFYEPAEISGYDNKFSSLLVKRLITRMYQQNYLINSVNDSNQNRFVGHNKNFYSQMISEGFAAIVEIPFSLRLASSLEEKKEIPKSQNLRSIHSIFPFFEDKLSHLNYVSDILIPYPVHLEILVQILQCWIQDVPSLHLLRFFFHEYHNWNNLITQKKSSYGFSKENPRLFWFLYNSYVVECESILVFLRKQSSYLRSTSSGPFLERTHFYEKIGQHLIVLCCNDFQKTLWLFKDPFMHYVRYQGKSILASKRTHLLMKKWKSYFVNFWQCHFHFWSQPCRIHINQFSNFSFYFLGYLSNVPINPSAVKSQMLENSFLIDTVTKKFETIVPIIPMIGSLSKAKFCNVSGNPISKPVWADLSDSDIIDRFGRICRNLSHYYSGSSKKQSLYRIKYILRLSCARTLARKHKSTVRAFLQRLGSEFLEEFFTEEEKVLSLILPRISYPLHKLYRERIWYLDIIRINDLVNHL.

It belongs to the intron maturase 2 family. MatK subfamily.

The protein resides in the plastid. Its subcellular location is the chloroplast. In terms of biological role, usually encoded in the trnK tRNA gene intron. Probably assists in splicing its own and other chloroplast group II introns. This Anchomanes difformis (Amorphophallus difformis) protein is Maturase K.